The following is a 165-amino-acid chain: MASGVQVADEVCRIFYDMKVRKCSTPEEIKKRKKAVIFCLSADKKCIIVEEGKEILVGDVGVTITDPFKHFVGMLPEKDCRYALYDASFETKESRKEELMFFLWAPELAPLKSKMIYASSKDAIKKKFQGIKHECQANGPEDLNRACIAEKLGGSLIVAFEGCPV.

Ala2 is subject to N-acetylalanine. A Phosphoserine modification is found at Ser3. Residues 4–153 (GVQVADEVCR…NRACIAEKLG (150 aa)) form the ADF-H domain. At Lys19 the chain carries N6-acetyllysine. The Nuclear localization signal motif lies at 30-34 (KKRKK).

This sequence belongs to the actin-binding proteins ADF family. In terms of processing, ISGylated.

Functionally, actin-depolymerizing protein. Severs actin filaments (F-actin) and binds to actin monomers (G-actin). Acts in a pH-independent manner. The protein is Destrin (DSTN) of Bos taurus (Bovine).